Consider the following 323-residue polypeptide: Melanocortin receptor 3 (323 aa).

Over 1–37 the chain is Extracellular; the sequence is MNSSCCPSSSYPTLPNLSQHPAAPSASNRSGSGFCEQ. 3 N-linked (GlcNAc...) asparagine glycosylation sites follow: N2, N16, and N28. A helical transmembrane segment spans residues 38–63; that stretch reads VFIKPEVFLALGIVSLMENILVILAV. Over 64–75 the chain is Cytoplasmic; it reads VRNGNLHSPMYF. A helical membrane pass occupies residues 76–100; that stretch reads FLCSLAAADMLVSLSNSLETIMIVV. At 101 to 118 the chain is on the extracellular side; the sequence is INSDSLTLEDQFIQHMDN. A helical transmembrane segment spans residues 119 to 140; that stretch reads IFDSMICISLVASICNLLAIAV. Over 141 to 160 the chain is Cytoplasmic; that stretch reads DRYVTIFYALRYHSIMTVRK. A helical transmembrane segment spans residues 161–181; it reads ALSLIVAIWVCCGICGVMFIV. Residues 182–186 lie on the Extracellular side of the membrane; it reads YSESK. The chain crosses the membrane as a helical span at residues 187–210; that stretch reads MVIVCLITMFFAMVLLMGTLYIHM. At 211-245 the chain is on the cytoplasmic side; the sequence is FLFARLHVQRIAALPPADGVAPQQHSCMKGAVTIT. The chain crosses the membrane as a helical span at residues 246–268; that stretch reads ILLGVFIFCWAPFFLHLVLIITC. The Extracellular portion of the chain corresponds to 269–277; that stretch reads PTNPYCICY. A helical membrane pass occupies residues 278-301; it reads TAHFNTYLVLIMCNSVIDPLIYAF. Topologically, residues 302 to 323 are cytoplasmic; that stretch reads RSLELRNTFKEILCGCNGMNVG. The S-palmitoyl cysteine moiety is linked to residue C315.

Belongs to the G-protein coupled receptor 1 family. Brain.

It localises to the cell membrane. Receptor for MSH (alpha, beta and gamma) and ACTH. This receptor is mediated by G proteins which activate adenylate cyclase. Required for expression of anticipatory patterns of activity and wakefulness during periods of limited nutrient availability and for the normal regulation of circadian clock activity in the brain. In Rattus norvegicus (Rat), this protein is Melanocortin receptor 3 (Mc3r).